A 153-amino-acid polypeptide reads, in one-letter code: Superoxide dismutase [Cu-Zn] (153 aa).

Cu cation-binding residues include His45, His47, and His62. Cys56 and Cys145 are oxidised to a cystine. Residues His62, His70, His79, and Asp82 each contribute to the Zn(2+) site. His119 lines the Cu cation pocket.

It belongs to the Cu-Zn superoxide dismutase family. As to quaternary structure, homodimer. Cu cation serves as cofactor. It depends on Zn(2+) as a cofactor.

It is found in the cytoplasm. It carries out the reaction 2 superoxide + 2 H(+) = H2O2 + O2. Functionally, destroys radicals which are normally produced within the cells and which are toxic to biological systems. This chain is Superoxide dismutase [Cu-Zn], found in Drosophila teissieri (Fruit fly).